The primary structure comprises 1199 residues: DNA-directed RNA polymerase subunit beta (1199 aa).

A disordered region spans residues 1175-1199 (EEKKAHEAAAQATDGKSANSTDDKK). The segment covering 1188 to 1199 (DGKSANSTDDKK) has biased composition (polar residues).

The protein belongs to the RNA polymerase beta chain family. In terms of assembly, the RNAP catalytic core consists of 2 alpha, 1 beta, 1 beta' and 1 omega subunit. When a sigma factor is associated with the core the holoenzyme is formed, which can initiate transcription.

The catalysed reaction is RNA(n) + a ribonucleoside 5'-triphosphate = RNA(n+1) + diphosphate. Its function is as follows. DNA-dependent RNA polymerase catalyzes the transcription of DNA into RNA using the four ribonucleoside triphosphates as substrates. This is DNA-directed RNA polymerase subunit beta from Lacticaseibacillus paracasei (strain ATCC 334 / BCRC 17002 / CCUG 31169 / CIP 107868 / KCTC 3260 / NRRL B-441) (Lactobacillus paracasei).